We begin with the raw amino-acid sequence, 363 residues long: MGFKCGIVGLPNVGKSTLFNALTKAGIEAANYPFCTIEPNTGVVPMPDPRLDALAEIVKPERVLPTTMEFVDIAGLVAGASKGEGLGNKFLANIRETDAIGHVVRCFENDDIVHVAGQINPAEDIDTINTELALADLDSCERAIQRLQKRAKGGDKDAKFELSIMEKILPVLENAGMIRSIDLDKDELQAIKGYNFLTLKPTMYIANVNEDGFENNPYLDRVREIAEKEGAVVVPVCAAIESEIAELDDDEKIEFLQDLGIEEPGLNRVIRAGYKLLNLQTYFTAGVKEVRAWTIPIGATAPKSAAVIHTDFEKGFIRAEVIAYDDFIQYKGEAGAKEAGKWRLEGKDYIVQDGDVMHFRFNV.

An OBG-type G domain is found at 3–256 (FKCGIVGLPN…LDDDEKIEFL (254 aa)). An ATP-binding site is contributed by 12–17 (NVGKST). Mg(2+)-binding residues include Ser16 and Thr36. The TGS domain maps to 278–361 (NLQTYFTAGV…QDGDVMHFRF (84 aa)).

It belongs to the TRAFAC class OBG-HflX-like GTPase superfamily. OBG GTPase family. YchF/OLA1 subfamily. It depends on Mg(2+) as a cofactor.

Functionally, ATPase that binds to both the 70S ribosome and the 50S ribosomal subunit in a nucleotide-independent manner. In Pasteurella multocida (strain Pm70), this protein is Ribosome-binding ATPase YchF.